Here is a 601-residue protein sequence, read N- to C-terminus: Protein nubbin (601 aa).

Residues 1 to 25 (MVMSELRWHTASPEDNKNSLKRDLL) show a composition bias toward basic and acidic residues. Disordered stretches follow at residues 1–32 (MVMS…PTSA), 49–94 (SRSP…AKRQ), 121–158 (KQEE…ATAS), 351–425 (PASS…ETTD), and 581–601 (INPS…YMMH). The span at 49–68 (SRSPSPLQSNASDCDDNNSS) shows a compositional bias: low complexity. A compositionally biased stretch (polar residues) spans 135 to 157 (NLTSDNSRHSTQSPSNSVKSATA). A compositionally biased stretch (low complexity) spans 384–415 (TPSTPTSGTQMSQGTTTPQPKTVASAAAARAA). The POU-specific domain occupies 421-495 (EETTDLEELE…LLQKWLDDAD (75 aa)). The segment at residues 523-582 (RRKKRTSIETTIRGALEKAFLANQKPTSEEITQLADRLSMEKEVVRVWFCNRRQKEKRIN) is a DNA-binding region (homeobox). Residues 591 to 601 (ADDDESSYMMH) show a composition bias toward acidic residues.

This sequence belongs to the POU transcription factor family. Class-2 subfamily. Initial expression in cellular blastoderm stage, then in ectodermal stripes during germband extension. Broad expression in the neuroectoderm followed by limitation to discrete subsets of CNS cells, and expression in specific PNS neurons and support cells.

The protein localises to the nucleus. DNA-binding regulatory protein implicated in early development. Involved in neuronal cell fate decision. Repressed directly or indirectly by the BX-C homeotic proteins. The sequence is that of Protein nubbin (nub) from Drosophila melanogaster (Fruit fly).